The primary structure comprises 267 residues: MLNIVMIGCGAIGAGVLELLENDPQLRVDAVIVPRDSETQVRHRLASLRRPPRVLSALPAGERPDLLVECAGHRAIEQHVLPALAQGIPCLVVSVGALSEPGLVERLEAAAQAGGSRIELLPGAIGAIDALSAARVGGLESVRYTGRKPASAWLGTPGETVCDLQRLEKARVIFDGSAREAARLYPKNANVAATLSLAGLGLDRTQVRLIADPESCENVHQVEASGAFGGFELTLRGKPLAANPKTSALTVYSVVRALGNHAHAISI.

NAD(+) is bound by residues Ala-124 and Asn-190. His-220 is a catalytic residue.

The protein belongs to the L-aspartate dehydrogenase family.

It carries out the reaction L-aspartate + NADP(+) + H2O = oxaloacetate + NH4(+) + NADPH + H(+). The catalysed reaction is L-aspartate + NAD(+) + H2O = oxaloacetate + NH4(+) + NADH + H(+). It functions in the pathway cofactor biosynthesis; NAD(+) biosynthesis; iminoaspartate from L-aspartate (dehydrogenase route): step 1/1. In terms of biological role, specifically catalyzes the NAD or NADP-dependent dehydrogenation of L-aspartate to iminoaspartate. The chain is L-aspartate dehydrogenase from Pseudomonas aeruginosa (strain ATCC 15692 / DSM 22644 / CIP 104116 / JCM 14847 / LMG 12228 / 1C / PRS 101 / PAO1).